Consider the following 518-residue polypeptide: UDP-N-acetylmuramate--L-alanine ligase (518 aa).

Position 158 to 164 (158 to 164) interacts with ATP; it reads GTHGKTT.

It belongs to the MurCDEF family.

The protein resides in the cytoplasm. The catalysed reaction is UDP-N-acetyl-alpha-D-muramate + L-alanine + ATP = UDP-N-acetyl-alpha-D-muramoyl-L-alanine + ADP + phosphate + H(+). The protein operates within cell wall biogenesis; peptidoglycan biosynthesis. Cell wall formation. The chain is UDP-N-acetylmuramate--L-alanine ligase from Crocosphaera subtropica (strain ATCC 51142 / BH68) (Cyanothece sp. (strain ATCC 51142)).